The primary structure comprises 183 residues: uncharacterized protein (183 aa).

The signal sequence occupies residues 1 to 29 (MQCWQQPFLRFLQQPFFLATASLAGSSSS). The tract at residues 149–183 (PGSTCDGSLKGRAYPSCVPKRDPEHSREESHPLSG) is disordered. Residues 167–183 (PKRDPEHSREESHPLSG) are compositionally biased toward basic and acidic residues.

The protein resides in the secreted. This is an uncharacterized protein from Homo sapiens (Human).